Reading from the N-terminus, the 664-residue chain is MDYKFIVFNAARDNNLAQLKATLYNKSSVEVGSLISAKVNGATPLVISCRNGHYDIVEYLLTKCRANVEQVGSVSFDGEPIEDAPPLWCAAAAGHLGIVKMLVRRGANVNSTTRTNSTPLRAACFDGHYEIVKYLVHHGADFEVANRHGHTCLMIACYKGHFRIAQYLLSLNADVNRCSVKGNTALHDCAESGSLQILQLLLKHGATMDVDYYGMTPLLAASVTGHMPIVEHLITLPCVSRESRIHALELLGATYVDRKRDMAAALNLWRRALEERAVEPPLEKKVQEPVPAYEMVREVTSVEELEEMVLDPDEMRMQALVIRQRILGPTHPDTSYYIRFRGAHYADAGRFDRCIELWSYALTMQQKILQPLSPMTQSSLLSFAELFSFMLVEAGRLLPRGRVVPPIEPDSMLTIFYKAVKEVERGLAFTLEQQKDQQHPQKQLPAADKSPSCSASSSASSSSSTTLLSAHQHDCNHDPNALSRTMISAIHIGCLLSSLLDTDALSPEMRRQVMGALYRLNRLKVRVRFDRTALHYACYREGTLAGRYPSCQFPSVTLAKALLEVGADPNAIDEAGNTPLHLATMQPYVEPLSHILLEGGAHLDTKNYAGETFESLLAPTPMHKIIDPMKYTTLACLAARTIKKHDIRYEGTVPATLYEFIELH.

ANK repeat units lie at residues 40–70 (NGATPLVISCRNGHYDIVEYLLTKCRANVEQ), 82–111 (EDAPPLWCAAAAGHLGIVKMLVRRGANVNS), 115–144 (TNSTPLRAACFDGHYEIVKYLVHHGADFEV), 148–177 (HGHTCLMIACYKGHFRIAQYLLSLNADVNR), 181–210 (KGNTALHDCAESGSLQILQLLLKHGATMDV), and 213–242 (YGMTPLLAASVTGHMPIVEHLITLPCVSRE). TPR repeat units follow at residues 245 to 279 (IHALELLGATYVDRKRDMAAALNLWRRALEERAVE) and 335 to 368 (SYYIRFRGAHYADAGRFDRCIELWSYALTMQQKI). The disordered stretch occupies residues 433–460 (QQKDQQHPQKQLPAADKSPSCSASSSAS). Positions 450-460 (SPSCSASSSAS) are enriched in low complexity. ANK repeat units follow at residues 529–571 (FDRT…DPNA) and 575–605 (AGNTPLHLATMQPYVEPLSHILLEGGAHLDT).

This sequence belongs to the fem-1 family. As to quaternary structure, component of a CRL2 E3 ubiquitin-protein ligase complex, also named ECS (Elongin BC-CUL2/5-SOCS-box protein) complex.

It functions in the pathway protein modification; protein ubiquitination. Its function is as follows. Substrate-recognition component of a Cul2-RING (CRL2) E3 ubiquitin-protein ligase complex of the DesCEND (destruction via C-end degrons) pathway, which recognizes a C-degron located at the extreme C terminus of target proteins, leading to their ubiquitination and degradation. The C-degron recognized by the DesCEND pathway is usually a motif of less than ten residues and can be present in full-length proteins, truncated proteins or proteolytically cleaved forms. This is Protein fem-1 homolog CG6966 from Drosophila melanogaster (Fruit fly).